We begin with the raw amino-acid sequence, 342 residues long: Fructose-1,6-bisphosphatase class 1 (342 aa).

Mg(2+)-binding residues include E97, D119, L121, and D122. Substrate-binding positions include 122-125 (DGSS), N215, Y247, and K280. E286 contributes to the Mg(2+) binding site.

This sequence belongs to the FBPase class 1 family. As to quaternary structure, homotetramer. The cofactor is Mg(2+).

It localises to the cytoplasm. It carries out the reaction beta-D-fructose 1,6-bisphosphate + H2O = beta-D-fructose 6-phosphate + phosphate. The protein operates within carbohydrate biosynthesis; gluconeogenesis. The sequence is that of Fructose-1,6-bisphosphatase class 1 from Leptospira interrogans serogroup Icterohaemorrhagiae serovar copenhageni (strain Fiocruz L1-130).